The following is a 220-amino-acid chain: Putative NAD(P)H nitroreductase SERP2086 (220 aa).

The protein belongs to the nitroreductase family. The cofactor is FMN.

In Staphylococcus epidermidis (strain ATCC 35984 / DSM 28319 / BCRC 17069 / CCUG 31568 / BM 3577 / RP62A), this protein is Putative NAD(P)H nitroreductase SERP2086.